The sequence spans 213 residues: Germin-like protein 8-14 (213 aa).

Residues 1-23 (MAKAVMMLPVLLSFLLLPFSSMA) form the signal peptide. A disulfide bond links C29 and C44. In terms of domain architecture, Cupin type-1 spans 56–203 (HGLAAAGNTS…VTFLDDAQVK (148 aa)). N63 is a glycosylation site (N-linked (GlcNAc...) asparagine). Mn(2+)-binding residues include H104, H106, E111, and H151.

This sequence belongs to the germin family. As to quaternary structure, oligomer (believed to be a pentamer but probably hexamer). Phosphorylated on threonine residue.

The protein localises to the secreted. Its subcellular location is the extracellular space. The protein resides in the apoplast. Its function is as follows. May play a role in plant defense. Probably has no oxalate oxidase activity even if the active site is conserved. The chain is Germin-like protein 8-14 (GER5) from Oryza sativa subsp. japonica (Rice).